The sequence spans 285 residues: Acetyl-coenzyme A carboxylase carboxyl transferase subunit beta (285 aa).

The CoA carboxyltransferase N-terminal domain occupies 29–285; the sequence is IMTKCPKCKK…ILKIHQEVTK (257 aa). Zn(2+) contacts are provided by cysteine 33, cysteine 36, cysteine 52, and cysteine 55. The C4-type zinc-finger motif lies at 33 to 55; that stretch reads CPKCKKIMYTKELAENLNVCFNC.

It belongs to the AccD/PCCB family. As to quaternary structure, acetyl-CoA carboxylase is a heterohexamer composed of biotin carboxyl carrier protein (AccB), biotin carboxylase (AccC) and two subunits each of ACCase subunit alpha (AccA) and ACCase subunit beta (AccD). The cofactor is Zn(2+).

It is found in the cytoplasm. The enzyme catalyses N(6)-carboxybiotinyl-L-lysyl-[protein] + acetyl-CoA = N(6)-biotinyl-L-lysyl-[protein] + malonyl-CoA. Its pathway is lipid metabolism; malonyl-CoA biosynthesis; malonyl-CoA from acetyl-CoA: step 1/1. In terms of biological role, component of the acetyl coenzyme A carboxylase (ACC) complex. Biotin carboxylase (BC) catalyzes the carboxylation of biotin on its carrier protein (BCCP) and then the CO(2) group is transferred by the transcarboxylase to acetyl-CoA to form malonyl-CoA. This chain is Acetyl-coenzyme A carboxylase carboxyl transferase subunit beta, found in Staphylococcus aureus (strain Newman).